A 433-amino-acid polypeptide reads, in one-letter code: Pseudopaline synthase (433 aa).

A helical transmembrane segment spans residues 7–27 (SLGNVLLVGLGAVAIQVALDL). NAD(+) is bound by residues 16 to 19 (LGAV), 39 to 40 (NH), and Thr-154. The Proton donor/acceptor role is filled by His-219. Glu-364 contacts NAD(+).

Belongs to the staphylopine dehydrogenase family. In terms of assembly, homodimer. Interacts with CntL.

It localises to the cell membrane. The catalysed reaction is pseudopaline + NAD(+) + H2O = (2S)-2-amino-4-{[(1S)-1-carboxy-2-(1H-imidazol-4-yl)ethyl]amino}butanoate + 2-oxoglutarate + NADH + H(+). Functionally, catalyzes the NADH-dependent reductive condensation of alpha-ketoglutarate to the intermediate formed by the adjacently encoded enzyme CntL, namely (2S)-2-amino-4-{[(1S)-1-carboxy-2-(1H-imidazol-4-yl)ethyl]amino}butanoate, leading to the production of pseudopaline. This is the last step in the biosynthesis of the metallophore pseudopaline, which is involved in the acquisition of nickel and zinc, and thus enables bacterial growth inside the host, where metal access is limited. Therefore, this enzyme probably contributes to Pseudomonas virulence. Can use neither pyruvate nor NADPH in place of alpha-ketoglutarate and NADH, respectively. The chain is Pseudopaline synthase from Pseudomonas aeruginosa (strain UCBPP-PA14).